A 404-amino-acid chain; its full sequence is Acetate kinase (404 aa).

Position 9 (Asn-9) interacts with Mg(2+). Lys-16 is an ATP binding site. Residue Arg-100 participates in substrate binding. Residue Asp-157 is the Proton donor/acceptor of the active site. ATP-binding positions include 215–219 (HLGNG), 290–292 (DMR), and 335–339 (GIGEN). Mg(2+) is bound at residue Glu-386.

It belongs to the acetokinase family. Homodimer. It depends on Mg(2+) as a cofactor. Mn(2+) serves as cofactor.

The protein resides in the cytoplasm. It carries out the reaction acetate + ATP = acetyl phosphate + ADP. It functions in the pathway metabolic intermediate biosynthesis; acetyl-CoA biosynthesis; acetyl-CoA from acetate: step 1/2. Its function is as follows. Catalyzes the formation of acetyl phosphate from acetate and ATP. Can also catalyze the reverse reaction. This is Acetate kinase from Methylocella silvestris (strain DSM 15510 / CIP 108128 / LMG 27833 / NCIMB 13906 / BL2).